Consider the following 285-residue polypeptide: Diaminopimelate epimerase 2 (285 aa).

Substrate is bound by residues asparagine 11, asparagine 63, 73-74, asparagine 158, asparagine 191, 209-210, and 219-220; these read GN, ER, and GS.

The protein belongs to the diaminopimelate epimerase family. Homodimer.

The protein resides in the cytoplasm. It catalyses the reaction (2S,6S)-2,6-diaminopimelate = meso-2,6-diaminopimelate. It functions in the pathway amino-acid biosynthesis; L-lysine biosynthesis via DAP pathway; DL-2,6-diaminopimelate from LL-2,6-diaminopimelate: step 1/1. Catalyzes the stereoinversion of LL-2,6-diaminopimelate (L,L-DAP) to meso-diaminopimelate (meso-DAP), a precursor of L-lysine and an essential component of the bacterial peptidoglycan. In Nostoc sp. (strain PCC 7120 / SAG 25.82 / UTEX 2576), this protein is Diaminopimelate epimerase 2.